The sequence spans 702 residues: Polyribonucleotide nucleotidyltransferase (702 aa).

Mg(2+) is bound by residues aspartate 485 and aspartate 491. A KH domain is found at 552-612; that stretch reads PRTEIICIDP…EGVKKAISII (61 aa). One can recognise an S1 motif domain in the interval 622–690; sequence GEIYLGKVTK…NQGRINLSRK (69 aa).

Belongs to the polyribonucleotide nucleotidyltransferase family. It depends on Mg(2+) as a cofactor.

The protein localises to the cytoplasm. It catalyses the reaction RNA(n+1) + phosphate = RNA(n) + a ribonucleoside 5'-diphosphate. Functionally, involved in mRNA degradation. Catalyzes the phosphorolysis of single-stranded polyribonucleotides processively in the 3'- to 5'-direction. In Clostridium botulinum (strain Kyoto / Type A2), this protein is Polyribonucleotide nucleotidyltransferase.